A 193-amino-acid chain; its full sequence is Xanthine phosphoribosyltransferase (193 aa).

Xanthine is bound by residues Leu-20 and Thr-27. 128-132 (ANGQA) serves as a coordination point for 5-phospho-alpha-D-ribose 1-diphosphate. Lys-156 contributes to the xanthine binding site.

It belongs to the purine/pyrimidine phosphoribosyltransferase family. Xpt subfamily. As to quaternary structure, homodimer.

Its subcellular location is the cytoplasm. The catalysed reaction is XMP + diphosphate = xanthine + 5-phospho-alpha-D-ribose 1-diphosphate. It functions in the pathway purine metabolism; XMP biosynthesis via salvage pathway; XMP from xanthine: step 1/1. Converts the preformed base xanthine, a product of nucleic acid breakdown, to xanthosine 5'-monophosphate (XMP), so it can be reused for RNA or DNA synthesis. In Streptococcus uberis (strain ATCC BAA-854 / 0140J), this protein is Xanthine phosphoribosyltransferase.